Reading from the N-terminus, the 1544-residue chain is Transcriptional activator GLI3 (1544 aa).

Composition is skewed to polar residues over residues 1 to 10 (MEAQSHSSTT) and 402 to 429 (NPVQ…SSTG). Disordered stretches follow at residues 1 to 83 (MEAQ…EERA) and 373 to 477 (SAFG…QEPE). The span at 463–476 (VKEEGDKDESKQEP) shows a compositional bias: basic and acidic residues. The C2H2-type 1 zinc-finger motif lies at 482-509 (TNCHWEGCSREFDTQEQLVHHINNDHIH). The C2H2-type 2; degenerate zinc finger occupies 520–542 (LDCSREQKPFKAQYMLVVHMRRH). 3 consecutive C2H2-type zinc fingers follow at residues 548-572 (HKCT…LRSH), 578-603 (YVCE…NRTH), and 609-634 (YVCK…KTVH). 4 disordered regions span residues 622 to 728 (DPSS…YSNN), 865 to 919 (RSSG…DLPS), 1126 to 1155 (SVVL…VSKS), and 1327 to 1368 (HYQG…GNQS). A compositionally biased stretch (basic and acidic residues) spans 634–650 (HGPEAHVTKKQRGDIHP). Residues 660-685 (SHSQTRSPGQQTQGATGEQKDLNSTT) are compositionally biased toward polar residues. Residues 686–701 (SRREECLQVKAVKSEK) are compositionally biased toward basic and acidic residues. The segment covering 702–728 (PMTSQPSPGGQSTCSSEQSPISNYSNN) has biased composition (polar residues). Low complexity predominate over residues 865–882 (RSSGISPCFSSRRSSDAS). A compositionally biased stretch (polar residues) spans 1330-1355 (GVNQSSPMTLGQVSPTSQSSLHQGPQ).

It belongs to the GLI C2H2-type zinc-finger protein family. Post-translationally, phosphorylation is essential for its proteolytic processing. In terms of processing, the repressor form (GLI3R), a C-terminally truncated form is generated from the full-length GLI3 protein (GLI3FL) through proteolytic processing.

The protein localises to the nucleus. The protein resides in the cytoplasm. In terms of biological role, has a dual function as a transcriptional activator and a repressor of the sonic hedgehog (Shh) pathway, and plays a role in limb development. The full-length GLI3 form (GLI3FL) acts as an activator (GLI3A) while GLI3R, its C-terminally truncated form, acts as a repressor. The sequence is that of Transcriptional activator GLI3 (GLI3) from Gallus gallus (Chicken).